Here is a 317-residue protein sequence, read N- to C-terminus: Melanocyte-stimulating hormone receptor (317 aa).

Over 1–37 the chain is Extracellular; that stretch reads MPMQGAQRRLLGSLNSIPTATPNLGLAANHTGAPCLE. N-linked (GlcNAc...) asparagine glycosylation occurs at asparagine 29. The chain crosses the membrane as a helical span at residues 38–63; sequence VSIPDWLFLSLGLVSLVQNVLVVAAI. At 64–72 the chain is on the cytoplasmic side; the sequence is AKNRNLHSP. The helical transmembrane segment at 73-93 threads the bilayer; the sequence is MYCFICCLALSDLLVSGSNML. At 94 to 118 the chain is on the extracellular side; it reads ETAVILMLEAGALATRASVVQQLQN. A helical membrane pass occupies residues 119-140; sequence TIDVLTCSSMLCSLCFLGAIAL. The Cytoplasmic segment spans residues 141–163; it reads DRYVSIFYALRYHSIVTLPRARR. Residues 164-183 traverse the membrane as a helical segment; the sequence is AIAATWVASVLSSTLFIAYC. Topologically, residues 184–191 are extracellular; it reads DHAAVLLC. A helical membrane pass occupies residues 192 to 211; sequence LVVFFLAMLVLMAVLYVHML. The Cytoplasmic portion of the chain corresponds to 212-240; the sequence is ARACQHAQGITRLHKRQLPAHQGFGLRGA. The helical transmembrane segment at 241–266 threads the bilayer; the sequence is ATLTILLGIFFLCWGPFFLHLMLVVL. Topologically, residues 267–279 are extracellular; that stretch reads CPQHLTCSCIFKN. Residues 280–300 traverse the membrane as a helical segment; it reads FKVFLTLIICNTIIDPLIYAF. At 301-317 the chain is on the cytoplasmic side; the sequence is RSQELCRTLKEVLLCSW. Cysteine 315 carries the S-palmitoyl cysteine lipid modification.

Belongs to the G-protein coupled receptor 1 family. In terms of assembly, interacts with MGRN1, but does not undergo MGRN1-mediated ubiquitination; this interaction competes with GNAS-binding and thus inhibits agonist-induced cAMP production. Interacts with OPN3; the interaction results in a decrease in MC1R-mediated cAMP signaling and ultimately a decrease in melanin production in melanocytes.

Its subcellular location is the cell membrane. Its function is as follows. Receptor for MSH (alpha, beta and gamma) and ACTH. The activity of this receptor is mediated by G proteins which activate adenylate cyclase. Mediates melanogenesis, the production of eumelanin (black/brown) and phaeomelanin (red/yellow), via regulation of cAMP signaling in melanocytes. This chain is Melanocyte-stimulating hormone receptor (MC1R), found in Alouatta seniculus (Red howler monkey).